The following is a 141-amino-acid chain: MAWPLCTLLLLLATQAVALAWSPQEEDRIIEGGIYDADLNDERVQRALHFVISEYNKATEDEYYRRLLRVLRAREQIVGGVNYFFDIEVGRTICTKSQPNLDTCAFHEQPELQKKQLCSFQIYEVPWEDRMSLVNSRCQEA.

A signal peptide spans 1 to 20 (MAWPLCTLLLLLATQAVALA). Residues 76 to 80 (QIVGG) carry the Secondary area of contact motif. Disulfide bonds link Cys94–Cys104 and Cys118–Cys138.

Expressed in submandibular and sublingual saliva but not in parotid saliva (at protein level). Expressed in submandibular gland and parotid gland.

It localises to the secreted. In terms of biological role, thiol protease inhibitor. The protein is Cystatin-SA (CST2) of Homo sapiens (Human).